The primary structure comprises 851 residues: UPF0508 protein CAGL0M08074g (851 aa).

Belongs to the UPF0508 family.

This Candida glabrata (strain ATCC 2001 / BCRC 20586 / JCM 3761 / NBRC 0622 / NRRL Y-65 / CBS 138) (Yeast) protein is UPF0508 protein CAGL0M08074g.